The primary structure comprises 395 residues: ATP phosphoribosyltransferase regulatory subunit (395 aa).

The protein belongs to the class-II aminoacyl-tRNA synthetase family. HisZ subfamily. Heteromultimer composed of HisG and HisZ subunits.

The protein localises to the cytoplasm. It functions in the pathway amino-acid biosynthesis; L-histidine biosynthesis; L-histidine from 5-phospho-alpha-D-ribose 1-diphosphate: step 1/9. Functionally, required for the first step of histidine biosynthesis. May allow the feedback regulation of ATP phosphoribosyltransferase activity by histidine. In Pseudomonas savastanoi pv. phaseolicola (strain 1448A / Race 6) (Pseudomonas syringae pv. phaseolicola (strain 1448A / Race 6)), this protein is ATP phosphoribosyltransferase regulatory subunit.